Reading from the N-terminus, the 282-residue chain is Alpha/beta-gliadin A-III (282 aa).

The N-terminal stretch at 1–20 is a signal peptide; the sequence is MKTFLILALLAIVATTATSA. A compositionally biased stretch (low complexity) spans 27-59; the sequence is QLQPQNPSQQQPQEQVPLMQQQQQFPGQQEQFP. Disordered stretches follow at residues 27 to 122 and 220 to 240; these read QLQP…AQQQ and SGQVSFQSSQQNPQAQGSVQP. Residues 60–111 show a composition bias toward pro residues; that stretch reads PQQPYPHQQPFPSQQPYPQPQPFPPQLPYPQTQPFPPQQPYPQPQPQYPQPQ. Low complexity predominate over residues 112–122; it reads QPISQQQAQQQ. The segment covering 224-240 has biased composition (polar residues); it reads SFQSSQQNPQAQGSVQP.

Belongs to the gliadin/glutenin family. Substrate of transglutaminase.

Functionally, gliadin is the major seed storage protein in wheat. This Triticum aestivum (Wheat) protein is Alpha/beta-gliadin A-III.